Here is a 101-residue protein sequence, read N- to C-terminus: Iron-sulfur cluster assembly protein CyaY (101 aa).

Belongs to the frataxin family.

Its function is as follows. Involved in iron-sulfur (Fe-S) cluster assembly. May act as a regulator of Fe-S biogenesis. The chain is Iron-sulfur cluster assembly protein CyaY from Actinobacillus pleuropneumoniae serotype 5b (strain L20).